Consider the following 841-residue polypeptide: Neuronal tyrosine-phosphorylated phosphoinositide-3-kinase adapter 1 (841 aa).

Disordered stretches follow at residues 1–45, 64–448, 655–679, 745–769, and 812–833; these read MNLL…PGVR, PASQ…PAAL, RAWN…TSGI, RPCS…PLPP, and LPSW…RRQH. Residues 8 to 25 are compositionally biased toward basic and acidic residues; that stretch reads TKLEWRQHKEEEAKRSSS. A compositionally biased stretch (low complexity) spans 26–39; it reads KEVAPAGSAGPAAG. An involved in CYFIP1- and NCKAP1-binding region spans residues 76–186; the sequence is SAMAPRSLSC…DESCPPGPSP (111 aa). The span at 94–103 shows a compositional bias: gly residues; that stretch reads VGGGPGGASG. Residues 114 to 123 show a composition bias toward basic residues; that stretch reads PPAKPRRHPS. Residues 167 to 176 show a composition bias toward polar residues; it reads SPNTQLSVSF. Positions 224–243 are enriched in gly residues; it reads FRGGGRSGGGLAGPPLGGGG. Residues 252 to 261 show a composition bias toward acidic residues; the sequence is SDSEESEAIY. Residues 279-295 show a composition bias toward pro residues; the sequence is GPPPLTATSPPQQPHAL. Residues 759–769 show a composition bias toward pro residues; it reads PALPLPLPLPP.

Belongs to the NYAP family. As to quaternary structure, interacts with ACOT9, ARHGAP26 and PIK3R2. Interacts with components of the WAVE1 complex, CYFIP1 and NCKAP1; this interaction mediates PI3K-WAVE1 association and actin cytoskeleton remodeling. In terms of processing, phosphorylated on tyrosine residues by FYN upon stimulation with CNTN5.

Activates PI3K and concomitantly recruits the WAVE1 complex to the close vicinity of PI3K and regulates neuronal morphogenesis. This chain is Neuronal tyrosine-phosphorylated phosphoinositide-3-kinase adapter 1 (NYAP1), found in Homo sapiens (Human).